Here is a 225-residue protein sequence, read N- to C-terminus: 3-dehydroquinate dehydratase (225 aa).

Residues serine 6, 30–32 (EWR), and arginine 62 each bind 3-dehydroquinate. The Proton donor/acceptor role is filled by histidine 118. Lysine 143 serves as the catalytic Schiff-base intermediate with substrate. Residues arginine 186, threonine 205, and glutamine 209 each coordinate 3-dehydroquinate.

The protein belongs to the type-I 3-dehydroquinase family. Homodimer.

The catalysed reaction is 3-dehydroquinate = 3-dehydroshikimate + H2O. It participates in metabolic intermediate biosynthesis; chorismate biosynthesis; chorismate from D-erythrose 4-phosphate and phosphoenolpyruvate: step 3/7. Its function is as follows. Involved in the third step of the chorismate pathway, which leads to the biosynthesis of aromatic amino acids. Catalyzes the cis-dehydration of 3-dehydroquinate (DHQ) and introduces the first double bond of the aromatic ring to yield 3-dehydroshikimate. The protein is 3-dehydroquinate dehydratase of Streptococcus gordonii (strain Challis / ATCC 35105 / BCRC 15272 / CH1 / DL1 / V288).